The primary structure comprises 186 residues: Mitoferrin-2B (186 aa).

The stretch at 75-163 (SNVTAHMLAG…FACYEKLKKT (89 aa)) is one Solcar repeat. The next 3 membrane-spanning stretches (helical) occupy residues 77-96 (VTAH…CLMY), 137-157 (RGLN…FACY), and 172-185 (GNCH…NSCP).

Belongs to the mitochondrial carrier (TC 2.A.29) family.

It is found in the mitochondrion inner membrane. It carries out the reaction Fe(2+)(in) = Fe(2+)(out). Its function is as follows. Mitochondrial iron transporter that mediates iron uptake. Probably required for heme synthesis of hemoproteins and Fe-S cluster assembly in non-erythroid cells. The protein is Mitoferrin-2B (slc25a28-b) of Xenopus laevis (African clawed frog).